A 607-amino-acid polypeptide reads, in one-letter code: Sulfite reductase [NADPH] flavoprotein alpha-component (607 aa).

A Flavodoxin-like domain is found at 66-204 (VTILYGSQTG…AAGQWHADVL (139 aa)). Residues 72–77 (SQTGNG), 119–122 (STHG), and 155–164 (LGDSSYEFFC) each bind FMN. The FAD-binding FR-type domain occupies 239–456 (QNPYRAEVLV…VEPNKHFRLP (218 aa)). FAD is bound by residues Thr327, Leu361, 395–398 (RLYS), 413–415 (TVA), and 428–431 (GGAS). Residues 527–528 (SR), 533–537 (KIYVQ), and Asp569 each bind NADP(+). Tyr607 lines the FAD pocket.

The protein belongs to the NADPH-dependent sulphite reductase flavoprotein subunit CysJ family. In the N-terminal section; belongs to the flavodoxin family. It in the C-terminal section; belongs to the flavoprotein pyridine nucleotide cytochrome reductase family. In terms of assembly, alpha(8)-beta(8). The alpha component is a flavoprotein, the beta component is a hemoprotein. The cofactor is FAD. It depends on FMN as a cofactor.

It carries out the reaction hydrogen sulfide + 3 NADP(+) + 3 H2O = sulfite + 3 NADPH + 4 H(+). It participates in sulfur metabolism; hydrogen sulfide biosynthesis; hydrogen sulfide from sulfite (NADPH route): step 1/1. In terms of biological role, component of the sulfite reductase complex that catalyzes the 6-electron reduction of sulfite to sulfide. This is one of several activities required for the biosynthesis of L-cysteine from sulfate. The flavoprotein component catalyzes the electron flow from NADPH -&gt; FAD -&gt; FMN to the hemoprotein component. This chain is Sulfite reductase [NADPH] flavoprotein alpha-component, found in Shewanella oneidensis (strain ATCC 700550 / JCM 31522 / CIP 106686 / LMG 19005 / NCIMB 14063 / MR-1).